Consider the following 90-residue polypeptide: MIRLDKEYSGRRLLDIDHPESPFGTKESPAVVQSYFDKRNIGCRGGEGEDGHDVVWFWLDKGKSFECPVCSQYFEHGPPDGHGDDEDHHH.

Positions 43, 67, and 70 each coordinate Zn(2+).

This sequence belongs to the cytochrome c oxidase subunit 5B (TC 3.D.4.11) family.

In Arabidopsis thaliana (Mouse-ear cress), this protein is Putative cytochrome c oxidase subunit 5b-like.